A 91-amino-acid chain; its full sequence is Small ribosomal subunit protein uS19 (91 aa).

It belongs to the universal ribosomal protein uS19 family.

In terms of biological role, protein S19 forms a complex with S13 that binds strongly to the 16S ribosomal RNA. This chain is Small ribosomal subunit protein uS19, found in Opitutus terrae (strain DSM 11246 / JCM 15787 / PB90-1).